The primary structure comprises 87 residues: HssA/B-like protein 31 (87 aa).

Belongs to the hssA/B family.

The sequence is that of HssA/B-like protein 31 (hssl31) from Dictyostelium discoideum (Social amoeba).